Here is a 255-residue protein sequence, read N- to C-terminus: Syntaxin-6 (255 aa).

An N-acetylserine modification is found at serine 2. At serine 2 the chain carries Phosphoserine. A required for interaction with VPS51 region spans residues 2 to 168 (SMEDPFFVVK…QAQQQLIVEQ (167 aa)). At 2 to 234 (SMEDPFFVVK…VSHMTSDRRQ (233 aa)) the chain is on the cytoplasmic side. The stretch at 41 to 74 (EEIDWTTNELRNNLRSIEWDLEDLDETISIVEAN) forms a coiled coil. Phosphoserine occurs at positions 129 and 152. In terms of domain architecture, t-SNARE coiled-coil homology spans 163 to 225 (QLIVEQQDEQ…DNVMKKLAKV (63 aa)). The chain crosses the membrane as a helical; Anchor for type IV membrane protein span at residues 235–255 (WCAIAILFAVLLVVLILFLVL).

The protein belongs to the syntaxin family. Identified in a complex containing STX6, STX12, VAMP4 and VTI1A. Binds EEA1. Interacts with VPS45A. Interacts with MARCHF2; the interaction promotes MARCHF2-mediated ubiquitination and degradation of CFTR. Interacts with MARCHF3. Interacts with GOPC. Interacts with BLTP3B (via C-terminal coiled-coil domain). Interacts with BAIAP3; this interaction is increased in the presence of calcium. Interacts with VPS13B.

Its subcellular location is the golgi apparatus membrane. It is found in the golgi apparatus. The protein resides in the trans-Golgi network membrane. The protein localises to the recycling endosome membrane. Functionally, SNARE promoting movement of transport vesicles to target membranes. Targets endosomes to the trans-Golgi network, and may therefore function in retrograde trafficking. Together with SNARE STX12, promotes movement of vesicles from endosomes to the cell membrane, and may therefore function in the endocytic recycling pathway. The chain is Syntaxin-6 (STX6) from Homo sapiens (Human).